The following is a 274-amino-acid chain: Undecaprenyl-diphosphatase 1 (274 aa).

8 helical membrane-spanning segments follow: residues 4–24, 45–65, 84–104, 111–131, 146–166, 186–206, 217–237, and 249–269; these read LLLL…FLPI, SAVF…YEYW, HLAI…LSFG, LFND…IMWI, IGLK…IPGT, ATEF…LLDL, FDWS…LLLI, and FMVF…FAYT.

It belongs to the UppP family.

The protein resides in the cell inner membrane. It carries out the reaction di-trans,octa-cis-undecaprenyl diphosphate + H2O = di-trans,octa-cis-undecaprenyl phosphate + phosphate + H(+). Catalyzes the dephosphorylation of undecaprenyl diphosphate (UPP). Confers resistance to bacitracin. The sequence is that of Undecaprenyl-diphosphatase 1 from Acinetobacter baylyi (strain ATCC 33305 / BD413 / ADP1).